A 351-amino-acid polypeptide reads, in one-letter code: Uroporphyrinogen decarboxylase (351 aa).

Residues Arg-25–Arg-29, Asp-74, Tyr-151, Ser-206, and His-325 contribute to the substrate site.

Belongs to the uroporphyrinogen decarboxylase family. Homodimer.

The protein localises to the cytoplasm. It catalyses the reaction uroporphyrinogen III + 4 H(+) = coproporphyrinogen III + 4 CO2. Its pathway is porphyrin-containing compound metabolism; protoporphyrin-IX biosynthesis; coproporphyrinogen-III from 5-aminolevulinate: step 4/4. Functionally, catalyzes the decarboxylation of four acetate groups of uroporphyrinogen-III to yield coproporphyrinogen-III. This chain is Uroporphyrinogen decarboxylase, found in Chlorobaculum parvum (strain DSM 263 / NCIMB 8327) (Chlorobium vibrioforme subsp. thiosulfatophilum).